The primary structure comprises 141 residues: Nucleoside diphosphate kinase (141 aa).

Residues lysine 11, phenylalanine 59, arginine 87, threonine 93, arginine 104, and asparagine 114 each coordinate ATP. Histidine 117 acts as the Pros-phosphohistidine intermediate in catalysis.

It belongs to the NDK family. In terms of assembly, homotetramer. Requires Mg(2+) as cofactor.

The protein localises to the cytoplasm. The enzyme catalyses a 2'-deoxyribonucleoside 5'-diphosphate + ATP = a 2'-deoxyribonucleoside 5'-triphosphate + ADP. It carries out the reaction a ribonucleoside 5'-diphosphate + ATP = a ribonucleoside 5'-triphosphate + ADP. Functionally, major role in the synthesis of nucleoside triphosphates other than ATP. The ATP gamma phosphate is transferred to the NDP beta phosphate via a ping-pong mechanism, using a phosphorylated active-site intermediate. This Photorhabdus laumondii subsp. laumondii (strain DSM 15139 / CIP 105565 / TT01) (Photorhabdus luminescens subsp. laumondii) protein is Nucleoside diphosphate kinase.